The primary structure comprises 89 residues: uncharacterized protein (89 aa).

The tract at residues 66–89 (RIKEQSSSSSATRTTQEPSLHLPD) is disordered.

This is an uncharacterized protein from Cestrum parqui (CmYLCV).